The primary structure comprises 689 residues: Elongation factor G (689 aa).

The tr-type G domain occupies 8 to 282 (ERTRNIGIMA…GVVAYMPSPL (275 aa)). Residues 17–24 (AHIDAGKT), 81–85 (DTPGH), and 135–138 (NKMD) each bind GTP.

It belongs to the TRAFAC class translation factor GTPase superfamily. Classic translation factor GTPase family. EF-G/EF-2 subfamily.

The protein resides in the cytoplasm. Functionally, catalyzes the GTP-dependent ribosomal translocation step during translation elongation. During this step, the ribosome changes from the pre-translocational (PRE) to the post-translocational (POST) state as the newly formed A-site-bound peptidyl-tRNA and P-site-bound deacylated tRNA move to the P and E sites, respectively. Catalyzes the coordinated movement of the two tRNA molecules, the mRNA and conformational changes in the ribosome. This Alkaliphilus metalliredigens (strain QYMF) protein is Elongation factor G.